The chain runs to 401 residues: Multidrug resistance protein MdtA (401 aa).

The first 20 residues, 1 to 20 (MNQNNKHRTLLFRAALAAIA), serve as a signal peptide directing secretion.

This sequence belongs to the membrane fusion protein (MFP) (TC 8.A.1) family. As to quaternary structure, part of a tripartite efflux system composed of MdtA, MdtB and MdtC.

It is found in the cell inner membrane. This Photorhabdus laumondii subsp. laumondii (strain DSM 15139 / CIP 105565 / TT01) (Photorhabdus luminescens subsp. laumondii) protein is Multidrug resistance protein MdtA.